The chain runs to 294 residues: Protoheme IX farnesyltransferase (294 aa).

A run of 9 helical transmembrane segments spans residues 8 to 28 (LTKP…FLIA), 35 to 55 (YSLF…GCVL), 81 to 101 (IFLN…FLFL), 107 to 127 (VLTI…YSLW), 133 to 153 (IYSI…GYCA), 163 to 183 (LMLL…IAIL), 209 to 226 (MVVY…FTVM), 230 to 252 (SYIF…FYGY), and 266 to 286 (FLLS…DHIL).

Belongs to the UbiA prenyltransferase family. Protoheme IX farnesyltransferase subfamily.

The protein localises to the cell inner membrane. It carries out the reaction heme b + (2E,6E)-farnesyl diphosphate + H2O = Fe(II)-heme o + diphosphate. Its pathway is porphyrin-containing compound metabolism; heme O biosynthesis; heme O from protoheme: step 1/1. Its function is as follows. Converts heme B (protoheme IX) to heme O by substitution of the vinyl group on carbon 2 of heme B porphyrin ring with a hydroxyethyl farnesyl side group. This is Protoheme IX farnesyltransferase from Blochmanniella pennsylvanica (strain BPEN).